The sequence spans 228 residues: Ran-binding protein 1 homolog a (228 aa).

A compositionally biased stretch (basic and acidic residues) spans 1–13; that stretch reads MATNEPEHEHRDE. Disordered regions lie at residues 1 to 30 and 159 to 228; these read MATN…QVAP and SEEE…GPST. Residues 14–24 show a composition bias toward acidic residues; that stretch reads EEAGANEDEDT. The region spanning 27–162 is the RanBD1 domain; it reads QVAPIVRLEE…FKEVAESEEE (136 aa). Over residues 179-228 the composition is skewed to basic and acidic residues; it reads LTVEETKTEEKTEAKAVETAKTEVKAEEKKESEAEKSGEAKKTEESGPST.

As to quaternary structure, interacts with the GTP-bound form of RAN1, RAN2 and RAN3. In terms of tissue distribution, ubiquitous. Preferentially expressed in root tips and gynoecium.

The protein localises to the nucleus. It localises to the nuclear pore complex. The chain is Ran-binding protein 1 homolog a (RANBP1A) from Arabidopsis thaliana (Mouse-ear cress).